We begin with the raw amino-acid sequence, 428 residues long: uncharacterized protein (428 aa).

Residue His-68 participates in Zn(2+) binding. The Proton acceptor role is filled by Glu-71. Zn(2+) is bound by residues His-72 and Glu-143.

It belongs to the peptidase M16 family. Requires Zn(2+) as cofactor.

This is an uncharacterized protein from Bacillus subtilis (strain 168).